The chain runs to 359 residues: DNA replication and repair protein RecF (359 aa).

30–37 contributes to the ATP binding site; it reads GPNAKGKT.

The protein belongs to the RecF family.

It is found in the cytoplasm. Its function is as follows. The RecF protein is involved in DNA metabolism; it is required for DNA replication and normal SOS inducibility. RecF binds preferentially to single-stranded, linear DNA. It also seems to bind ATP. In Protochlamydia amoebophila (strain UWE25), this protein is DNA replication and repair protein RecF.